Here is a 656-residue protein sequence, read N- to C-terminus: Macrolide export ATP-binding/permease protein MacB (656 aa).

Positions 6-244 (LEVSACYRSF…AAPKTEVIPA (239 aa)) constitute an ABC transporter domain. 42-49 (GASGSGKS) contacts ATP. 4 consecutive transmembrane segments (helical) span residues 277–297 (FLTM…VALG), 531–551 (LLIS…VMNI), 586–606 (LVCL…GVVF), and 621–641 (SIVA…FLPA).

Belongs to the ABC transporter superfamily. Macrolide exporter (TC 3.A.1.122) family. As to quaternary structure, homodimer. Part of the tripartite efflux system MacAB-TolC, which is composed of an inner membrane transporter, MacB, a periplasmic membrane fusion protein, MacA, and an outer membrane component, TolC. The complex forms a large protein conduit and can translocate molecules across both the inner and outer membranes. Interacts with MacA.

The protein resides in the cell inner membrane. In terms of biological role, part of the tripartite efflux system MacAB-TolC. MacB is a non-canonical ABC transporter that contains transmembrane domains (TMD), which form a pore in the inner membrane, and an ATP-binding domain (NBD), which is responsible for energy generation. Confers resistance against macrolides. The polypeptide is Macrolide export ATP-binding/permease protein MacB (Shewanella sp. (strain ANA-3)).